Reading from the N-terminus, the 362-residue chain is Probable secreted beta-glucosidase UTH1 (362 aa).

The signal sequence occupies residues 1–17 (MKLSALLALSASTAVLA).

This sequence belongs to the SUN family.

It localises to the mitochondrion outer membrane. The protein localises to the secreted. It is found in the cell wall. Its function is as follows. Involved in aging, oxidative stress response, and in the regulation of mitochondrial biogenesis. Inactivation of UTH1 increases life span, leads to higher resistance to heat stress and to hydrogen peroxide, and increases sensitivity to the superoxide radical-generating drug paraquat and to copper. Also required for the selective autophagic degradation of mitochondria (mitophagy) in response to nitrogen starvation. May play a role in cell wall morphogenesis and septation. Involved in the remodeling of the cell wall during the various phases of yeast culture development and under various environmental conditions and plays a role in septation. Involved in cell sensitivity to boric acid. This is Probable secreted beta-glucosidase UTH1 (UTH1) from Saccharomyces cerevisiae (strain YJM789) (Baker's yeast).